The sequence spans 273 residues: MGQKVTGGIKTVDMRDPTYRPLKQELQGLDYCKPTRLDLLLDMPPVSYDVQLLHSWNNNDRSLNVFVKEDDKLIFHRHPVAQSTDAIRGKVGYTRGLHVWQITWAMRQRGTHAVVGVATADAPLHSVGYTTLVGNNHESWGWDLGRNRLYHDGKNQPSKTYPAFLEPDETFIVPDSFLVALDMDDGTLSFIVDGQYMGVAFRGLKGKKLYPVVSAVWGHCEIRMRYLNGLDPEPLPLMDLCRRSVRLALGKGRLGEIHALPLPASLKAYLLYQ.

Tyr31 carries the phosphotyrosine modification. A B30.2/SPRY domain is found at 33–231 (KPTRLDLLLD…IRMRYLNGLD (199 aa)). The region spanning 232–273 (PEPLPLMDLCRRSVRLALGKGRLGEIHALPLPASLKAYLLYQ) is the SOCS box domain.

Belongs to the SPSB family. As to quaternary structure, component of the probable ECS(SPSB1) E3 ubiquitin-protein ligase complex which contains CUL5, RNF7/RBX2, Elongin BC complex and SPSB1. Interacts with CUL5, RNF7, ELOB and ELOC. Directly interacts with MET tyrosine kinase domain in the presence and in the absence of HGF, however HGF treatment has a positive effect on this interaction. When phosphorylated, interacts with RASA1 without affecting its stability. Interacts (via B30.2/SPRY domain) with PAWR; this interaction is direct and occurs in association with the Elongin BC complex. Interacts with NOS2 and EPHB2.

Its subcellular location is the cytoplasm. The protein localises to the cytosol. Its pathway is protein modification; protein ubiquitination. Functionally, substrate recognition component of a SCF-like ECS (Elongin BC-CUL2/5-SOCS-box protein) E3 ubiquitin-protein ligase complex which mediates the ubiquitination and subsequent proteasomal degradation of target proteins. Negatively regulates nitric oxide (NO) production and limits cellular toxicity in activated macrophages by mediating the ubiquitination and proteasomal degradation of NOS2. Acts as a bridge which links NOS2 with the ECS E3 ubiquitin ligase complex components ELOC and CUL5. The polypeptide is SPRY domain-containing SOCS box protein 1 (SPSB1) (Bos taurus (Bovine)).